The sequence spans 906 residues: Aconitate hydratase A (906 aa).

Positions 443, 509, and 512 each coordinate [4Fe-4S] cluster.

It belongs to the aconitase/IPM isomerase family. In terms of assembly, monomer. It depends on [4Fe-4S] cluster as a cofactor.

It carries out the reaction citrate = D-threo-isocitrate. The enzyme catalyses (2S,3R)-3-hydroxybutane-1,2,3-tricarboxylate = 2-methyl-cis-aconitate + H2O. It participates in carbohydrate metabolism; tricarboxylic acid cycle; isocitrate from oxaloacetate: step 2/2. The protein operates within organic acid metabolism; propanoate degradation. In terms of biological role, involved in the catabolism of short chain fatty acids (SCFA) via the tricarboxylic acid (TCA)(acetyl degradation route) and probably via the 2-methylcitrate cycle I (propionate degradation route). Catalyzes the reversible isomerization of citrate to isocitrate via cis-aconitate. Could catalyze the hydration of 2-methyl-cis-aconitate to yield (2R,3S)-2-methylisocitrate. The apo form of AcnA functions as a RNA-binding regulatory protein. The chain is Aconitate hydratase A from Bradyrhizobium diazoefficiens (strain JCM 10833 / BCRC 13528 / IAM 13628 / NBRC 14792 / USDA 110).